A 413-amino-acid polypeptide reads, in one-letter code: Protein LAZY 1 (413 aa).

A helical membrane pass occupies residues 71–91; the sequence is FTFGGSGLLTIGTLGIAAVAV. A compositionally biased stretch (acidic residues) spans 103-124; it reads DADADSDFDDNDDTAGDDEDQV. Disordered stretches follow at residues 103-127 and 261-308; these read DADA…VDSA and EDGG…ASAT. 2 short sequence motifs (nuclear localization signal) span residues 275 to 298 and 338 to 345; these read RKAG…EKVP and KKSRKRGS.

The protein belongs to the LAZY family. In terms of tissue distribution, expressed in the node of the stem, initiating leaf founder cells, young leaf primordia, tips of axillary meristems, spikelet pair meristems of developing tassels and ears, male flower primordia, tassels, ears, silks and seeds. Expressed in leaf sheaths, leaf pulvinus and shoot apical meristem (SAM).

Its subcellular location is the cell membrane. The protein localises to the nucleus. Involved in the regulation of shoot gravitropism, and tassel and ear development through the regulation of polar auxin transport (PAT) and auxin signaling. Acts as a negative regulator of basipetal PAT, but positive regulator of lateral auxin transport. Involved in the regulation of shoot gravitropism and leaf angle through the regulation of cell development. This chain is Protein LAZY 1, found in Zea mays (Maize).